Here is a 279-residue protein sequence, read N- to C-terminus: Shikimate dehydrogenase (NADP(+)) (279 aa).

Shikimate contacts are provided by residues 21-23 and threonine 68; that span reads SKS. Lysine 72 serves as the catalytic Proton acceptor. Glutamate 84 lines the NADP(+) pocket. Shikimate is bound by residues asparagine 93 and aspartate 109. NADP(+) is bound by residues 133–137, 157–162, and methionine 220; these read GAGGA and NRTQAK. Tyrosine 222 provides a ligand contact to shikimate. An NADP(+)-binding site is contributed by glycine 244.

The protein belongs to the shikimate dehydrogenase family. Homodimer.

It catalyses the reaction shikimate + NADP(+) = 3-dehydroshikimate + NADPH + H(+). It functions in the pathway metabolic intermediate biosynthesis; chorismate biosynthesis; chorismate from D-erythrose 4-phosphate and phosphoenolpyruvate: step 4/7. Involved in the biosynthesis of the chorismate, which leads to the biosynthesis of aromatic amino acids. Catalyzes the reversible NADPH linked reduction of 3-dehydroshikimate (DHSA) to yield shikimate (SA). This Shewanella halifaxensis (strain HAW-EB4) protein is Shikimate dehydrogenase (NADP(+)).